Consider the following 227-residue polypeptide: Phosphoribosylformylglycinamidine synthase subunit PurQ (227 aa).

The Glutamine amidotransferase type-1 domain occupies 3–225 (FAVIVFPGSN…LKQWRETYVV (223 aa)). Cys-86 (nucleophile) is an active-site residue. Residues His-194 and Glu-196 contribute to the active site.

As to quaternary structure, part of the FGAM synthase complex composed of 1 PurL, 1 PurQ and 2 PurS subunits.

The protein resides in the cytoplasm. The catalysed reaction is N(2)-formyl-N(1)-(5-phospho-beta-D-ribosyl)glycinamide + L-glutamine + ATP + H2O = 2-formamido-N(1)-(5-O-phospho-beta-D-ribosyl)acetamidine + L-glutamate + ADP + phosphate + H(+). It catalyses the reaction L-glutamine + H2O = L-glutamate + NH4(+). It functions in the pathway purine metabolism; IMP biosynthesis via de novo pathway; 5-amino-1-(5-phospho-D-ribosyl)imidazole from N(2)-formyl-N(1)-(5-phospho-D-ribosyl)glycinamide: step 1/2. Functionally, part of the phosphoribosylformylglycinamidine synthase complex involved in the purines biosynthetic pathway. Catalyzes the ATP-dependent conversion of formylglycinamide ribonucleotide (FGAR) and glutamine to yield formylglycinamidine ribonucleotide (FGAM) and glutamate. The FGAM synthase complex is composed of three subunits. PurQ produces an ammonia molecule by converting glutamine to glutamate. PurL transfers the ammonia molecule to FGAR to form FGAM in an ATP-dependent manner. PurS interacts with PurQ and PurL and is thought to assist in the transfer of the ammonia molecule from PurQ to PurL. The chain is Phosphoribosylformylglycinamidine synthase subunit PurQ from Bacillus thuringiensis (strain Al Hakam).